Reading from the N-terminus, the 344-residue chain is MKNTMKRMFCSMTVLVTAPYNEEGRKELENLFGSVAYQSWKEQGRAYREDELIQLLKATNATGLITELDQVTDSVFASVPELSFVGVCRGMPSNVDVAAASKRGIPVFYTPGRNAQAVAEMFIGNVISFLRHTSASNQWLKDGEWDSDYLQAYVKFKGNELTGKTVGMIGFGAVGQRIAKLLTAFDCKIKYYDPYIQDDHPLYEKASLKTVFSDSDIVSVHLPRTEETLGLIDRQYFDLMKESAIFVNTSRAVVVNREDLLFVLKEHKISGAILDVFYHEPPEESDYELISLPNVLATPHLAGATFEVEDHHVTILNKALKKWKGEKTLNIQTMYNKDALKTGG.

NAD(+) is bound at residue D193. The active site involves R251. NAD(+) is bound at residue D275. Residue E280 is part of the active site. The active-site Proton donor is H300.

The protein belongs to the D-isomer specific 2-hydroxyacid dehydrogenase family.

The chain is Putative 2-hydroxyacid dehydrogenase YoaD (yoaD) from Bacillus subtilis (strain 168).